The primary structure comprises 330 residues: GTP 3',8-cyclase (330 aa).

In terms of domain architecture, Radical SAM core spans 9–225 (RFGRTVNYVR…IRRHHELIPA (217 aa)). Arg-18 is a binding site for GTP. [4Fe-4S] cluster is bound by residues Cys-25 and Cys-29. Tyr-31 is a binding site for S-adenosyl-L-methionine. Cys-32 serves as a coordination point for [4Fe-4S] cluster. Position 67 (Arg-67) interacts with GTP. Gly-71 contributes to the S-adenosyl-L-methionine binding site. Thr-97 provides a ligand contact to GTP. S-adenosyl-L-methionine is bound at residue Ser-121. Residue Lys-158 coordinates GTP. Met-192 contributes to the S-adenosyl-L-methionine binding site. [4Fe-4S] cluster is bound by residues Cys-256 and Cys-259. GTP is bound at residue 261–263 (RVR). Residue Cys-273 coordinates [4Fe-4S] cluster.

This sequence belongs to the radical SAM superfamily. MoaA family. Monomer and homodimer. The cofactor is [4Fe-4S] cluster.

The catalysed reaction is GTP + AH2 + S-adenosyl-L-methionine = (8S)-3',8-cyclo-7,8-dihydroguanosine 5'-triphosphate + 5'-deoxyadenosine + L-methionine + A + H(+). It functions in the pathway cofactor biosynthesis; molybdopterin biosynthesis. In terms of biological role, catalyzes the cyclization of GTP to (8S)-3',8-cyclo-7,8-dihydroguanosine 5'-triphosphate. The chain is GTP 3',8-cyclase from Marinobacter nauticus (strain ATCC 700491 / DSM 11845 / VT8) (Marinobacter aquaeolei).